A 935-amino-acid polypeptide reads, in one-letter code: Inter-alpha-trypsin inhibitor heavy chain H2 (935 aa).

The N-terminal stretch at 1–18 (MKGLTCFLLCFLLSEAQG) is a signal peptide. Positions 19 to 53 (FEIPTNGLSEFAEYGDLAELALGKFHVVPGNRRSQ) are excised as a propeptide. The 130-residue stretch at 45-174 (VVPGNRRSQE…KVQFELHYQE (130 aa)) folds into the VIT domain. Asn-107 carries an N-linked (GlcNAc...) asparagine glycan. Glu-271 carries the post-translational modification 4-carboxyglutamate. The region spanning 297–457 (PKNILFVIDV…YDFLKRLSND (161 aa)) is the VWFA domain. A glycan (N-linked (GlcNAc...) asparagine) is linked at Asn-434. Phosphoserine is present on Ser-455. An Aspartate 1-(chondroitin 4-sulfate)-ester modification is found at Asp-691. A propeptide spanning residues 692 to 935 (PHFIIYLPRS…PLLYSFLKRP (244 aa)) is cleaved from the precursor. Ser-875 carries the post-translational modification Phosphoserine.

It belongs to the ITIH family. As to quaternary structure, I-alpha-I plasma protease inhibitors are assembled from one or two heavy chains (HC) and one light chain, bikunin. Inter-alpha-inhibitor (I-alpha-I) is composed of ITIH1/HC1, ITIH2/HC2 and bikunin. Post-translationally, heavy chains are linked to bikunin via chondroitin 4-sulfate esterified to the alpha-carboxyl of the C-terminal aspartate after propeptide cleavage. In terms of processing, phosphorylated by FAM20C in the extracellular medium.

Its subcellular location is the secreted. In terms of biological role, may act as a carrier of hyaluronan in serum or as a binding protein between hyaluronan and other matrix protein, including those on cell surfaces in tissues to regulate the localization, synthesis and degradation of hyaluronan which are essential to cells undergoing biological processes. This is Inter-alpha-trypsin inhibitor heavy chain H2 (ITIH2) from Sus scrofa (Pig).